Consider the following 825-residue polypeptide: Phenylalanine--tRNA ligase beta subunit (825 aa).

One can recognise a tRNA-binding domain in the interval R39–R154. In terms of domain architecture, B5 spans P411–E506. Mg(2+)-binding residues include D484, D490, E493, and E494. The region spanning S731–R824 is the FDX-ACB domain.

Belongs to the phenylalanyl-tRNA synthetase beta subunit family. Type 1 subfamily. In terms of assembly, tetramer of two alpha and two beta subunits. Requires Mg(2+) as cofactor.

It is found in the cytoplasm. It catalyses the reaction tRNA(Phe) + L-phenylalanine + ATP = L-phenylalanyl-tRNA(Phe) + AMP + diphosphate + H(+). This is Phenylalanine--tRNA ligase beta subunit from Synechococcus sp. (strain JA-2-3B'a(2-13)) (Cyanobacteria bacterium Yellowstone B-Prime).